Consider the following 312-residue polypeptide: Ribosomal RNA small subunit methyltransferase H (312 aa).

Residues 35–37 (GGH), Asp-55, Phe-79, Asp-101, and Gln-108 each bind S-adenosyl-L-methionine.

Belongs to the methyltransferase superfamily. RsmH family.

The protein resides in the cytoplasm. It catalyses the reaction cytidine(1402) in 16S rRNA + S-adenosyl-L-methionine = N(4)-methylcytidine(1402) in 16S rRNA + S-adenosyl-L-homocysteine + H(+). Functionally, specifically methylates the N4 position of cytidine in position 1402 (C1402) of 16S rRNA. The chain is Ribosomal RNA small subunit methyltransferase H from Buchnera aphidicola subsp. Schizaphis graminum (strain Sg).